Reading from the N-terminus, the 536-residue chain is Zinc finger protein 394 (536 aa).

The interval 18–45 (AVKVEEDSPGSQEPSGSGDWQNPETSRK) is disordered. Lysine 20 participates in a covalent cross-link: Glycyl lysine isopeptide (Lys-Gly) (interchain with G-Cter in SUMO2). The span at 26–41 (PGSQEPSGSGDWQNPE) shows a compositional bias: polar residues. One can recognise an SCAN box domain in the interval 44 to 126 (RKQFRQLRYQ…ALARTLQRAL (83 aa)). The KRAB domain maps to 135–196 (ATFKDVAESL…KQEMSKEAES (62 aa)). Residues lysine 207 and lysine 260 each participate in a glycyl lysine isopeptide (Lys-Gly) (interchain with G-Cter in SUMO2) cross-link. 3 C2H2-type zinc fingers span residues 328 to 350 (YKCD…QRTH), 356 to 378 (YQCQ…QRTH), and 384 to 406 (YACP…QRTH). The C2H2-type 4; atypical zinc-finger motif lies at 412 to 433 (CKCEECGEIFHISSLFKHQRLH). Lysine 413 participates in a covalent cross-link: Glycyl lysine isopeptide (Lys-Gly) (interchain with G-Cter in SUMO2). 3 C2H2-type zinc fingers span residues 439-461 (HKCE…QRIH), 467-489 (YMCF…QRTH), and 495-517 (YKCF…QRIH).

It belongs to the krueppel C2H2-type zinc-finger protein family.

The protein resides in the nucleus. Functionally, may be involved in transcriptional regulation. This Rattus norvegicus (Rat) protein is Zinc finger protein 394 (Znf394).